A 357-amino-acid polypeptide reads, in one-letter code: MSQSGKNGLTYSDAGVDIDAGNLLVEKIKPAVRSTRRPGADGEIGGFGGLFDLKAAGFNDPVLVAANDGVGTKLKIAIDADYHDTVGIDLVAMCVNDLVVQGAEPLFFLDYFATGKLDPDQGAAIVGGIAAGCRQAGCALIGGETAEMPGMYSSGDYDLAGFAVGAAERGKLLPSGDIAEGDVILGLASSGVHSNGFSLVRKIVELSGLGWDAPAPFASDKKLGEALLEPTRIYVKPLLKAIRETGAIKALAHITGGGFPENIPRVLPKHLAAEIDLAAVKAPPVFSWLARTGGVETKEMLRTFNCGVGMIAVVASENVAAVSAALEAEGETVVTLGRMIARDEGAAGTVYQGTLAL.

It belongs to the AIR synthase family.

The protein localises to the cytoplasm. It carries out the reaction 2-formamido-N(1)-(5-O-phospho-beta-D-ribosyl)acetamidine + ATP = 5-amino-1-(5-phospho-beta-D-ribosyl)imidazole + ADP + phosphate + H(+). The protein operates within purine metabolism; IMP biosynthesis via de novo pathway; 5-amino-1-(5-phospho-D-ribosyl)imidazole from N(2)-formyl-N(1)-(5-phospho-D-ribosyl)glycinamide: step 2/2. This is Phosphoribosylformylglycinamidine cyclo-ligase from Rhizobium leguminosarum bv. trifolii (strain WSM2304).